Reading from the N-terminus, the 117-residue chain is Large ribosomal subunit protein uL18 (117 aa).

The protein belongs to the universal ribosomal protein uL18 family. Part of the 50S ribosomal subunit; part of the 5S rRNA/L5/L18/L25 subcomplex. Contacts the 5S and 23S rRNAs.

Functionally, this is one of the proteins that bind and probably mediate the attachment of the 5S RNA into the large ribosomal subunit, where it forms part of the central protuberance. The polypeptide is Large ribosomal subunit protein uL18 (Vibrio campbellii (strain ATCC BAA-1116)).